The following is a 350-amino-acid chain: Nuclear pore complex-interacting protein family member A1 (350 aa).

Residues 306–325 are disordered; the sequence is KTPPECLLTPLPPSAPPSVD.

This sequence belongs to the NPIP family. May associate with the nuclear pore complex. Widely expressed.

The protein resides in the nucleus. It is found in the nuclear pore complex. Its subcellular location is the nucleus membrane. In Homo sapiens (Human), this protein is Nuclear pore complex-interacting protein family member A1 (NPIPA1).